The primary structure comprises 252 residues: Chitooligosaccharide deacetylase (252 aa).

Mg(2+)-binding residues include H61 and H125.

It belongs to the YdjC deacetylase family. ChbG subfamily. Homodimer. Mg(2+) serves as cofactor.

The protein localises to the cytoplasm. It carries out the reaction N,N'-diacetylchitobiose + H2O = N-acetyl-beta-D-glucosaminyl-(1-&gt;4)-D-glucosamine + acetate. The catalysed reaction is diacetylchitobiose-6'-phosphate + H2O = N'-monoacetylchitobiose-6'-phosphate + acetate. The protein operates within glycan degradation; chitin degradation. Involved in the degradation of chitin. ChbG is essential for growth on the acetylated chitooligosaccharides chitobiose and chitotriose but is dispensable for growth on cellobiose and chitosan dimer, the deacetylated form of chitobiose. Deacetylation of chitobiose-6-P and chitotriose-6-P is necessary for both the activation of the chb promoter by the regulatory protein ChbR and the hydrolysis of phosphorylated beta-glucosides by the phospho-beta-glucosidase ChbF. Catalyzes the removal of only one acetyl group from chitobiose-6-P to yield monoacetylchitobiose-6-P, the inducer of ChbR and the substrate of ChbF. The chain is Chitooligosaccharide deacetylase from Klebsiella pneumoniae (strain 342).